A 233-amino-acid polypeptide reads, in one-letter code: MTSPMGPTARDFWQNSRNSATIQRLIVSPMQTTALSSDLNSTYTPGEAHGHHGHPDLRMFGVVLFLVAESAIFLGLFTAYLIYRSVMPAWPPEGTPELELLLPGVNSIILISSSFVMHKGQAAIRNNDNAGLQKWFGITAAMGIIFLAGQMYEYFHLEMGLTTNLFASCFYVLTGFHGLHVTFGLLLILSVLWRSRQPGHYSRTSHFGVEAAELYWHFVDVVWIVLFILVYLL.

The next 4 helical transmembrane spans lie at 62-82 (VVLF…AYLI), 98-118 (LELL…FVMH), 135-155 (WFGI…YEYF), and 172-192 (VLTG…LSVL).

The protein belongs to the cytochrome c oxidase subunit 3 family.

The protein localises to the cell membrane. The catalysed reaction is 4 Fe(II)-[cytochrome c] + O2 + 8 H(+)(in) = 4 Fe(III)-[cytochrome c] + 2 H2O + 4 H(+)(out). This is Cytochrome c oxidase subunit 3 (ctaE) from Synechocystis sp. (strain ATCC 27184 / PCC 6803 / Kazusa).